The primary structure comprises 132 residues: Small ribosomal subunit protein uS8 (132 aa).

Belongs to the universal ribosomal protein uS8 family. Part of the 30S ribosomal subunit. Contacts proteins S5 and S12.

Functionally, one of the primary rRNA binding proteins, it binds directly to 16S rRNA central domain where it helps coordinate assembly of the platform of the 30S subunit. The protein is Small ribosomal subunit protein uS8 of Geobacillus kaustophilus (strain HTA426).